Consider the following 465-residue polypeptide: Hepatocyte nuclear factor 6 (465 aa).

2 disordered regions span residues 15 to 84 (GVSH…GPLH) and 119 to 141 (SDKFPHHHHHHHHHHHPHHHQRL). Positions 123 to 140 (PHHHHHHHHHHHPHHHQR) are enriched in basic residues. A DNA-binding region (CUT) is located at residues 283 to 369 (GSNSGQMEEI…QRMSALRLAA (87 aa)). The segment at residues 385–444 (PKKPRLVFTDVQRRTLHAIFKENKRPSKELQITISQQLGLELSTVSNFFMNARRRSLDKW) is a DNA-binding region (homeobox). Positions 443–465 (KWQDEGGSNSGSSSSSSSTCTKA) are disordered. A compositionally biased stretch (low complexity) spans 448–465 (GGSNSGSSSSSSSTCTKA).

Belongs to the CUT homeobox family. As to quaternary structure, binds DNA as a monomer.

It is found in the nucleus. Transcriptional activator. Binds the consensus sequence 5'-DHWATTGAYTWWD-3' on a variety of gene promoters such as those of HNF3B and TTR. Important for liver genes transcription. Stimulates the expression of Onecut3 in the developing endoderm. This Mus musculus (Mouse) protein is Hepatocyte nuclear factor 6 (Onecut1).